Here is a 541-residue protein sequence, read N- to C-terminus: Protein panoramix (541 aa).

The interval 1–169 is interaction with Piwi; that stretch reads MEAPMKLEVK…TLVPDEQQSF (169 aa). Disordered stretches follow at residues 52 to 75 and 198 to 281; these read SDPE…LQPS and TAEN…TELD. The stretch at 194 to 216 forms a coiled coil; that stretch reads MLEMTAENRKVKHKKKKHKKERS. Positions 203 to 220 are enriched in basic residues; it reads KVKHKKKKHKKERSHRSN. Basic and acidic residues-rich tracts occupy residues 241–251 and 269–279; these read DDKNQFDCDYR and SSKERKLRDTE. The tract at residues 315 to 343 is nxf2-interacting region (NIR); the sequence is LSKADKRSLAVARAELVLEQIQQKANKEE. Residues 323–343 are a coiled coil; sequence LAVARAELVLEQIQQKANKEE. Residues 387 to 446 are necessary for interaction with nxf2 and protein stability; sequence TPGTRIDLSKWGLETVPEATKRLLRLLGIDVARLKELQSTVKPSQRILKLKKEQLEQGLA.

In terms of assembly, in the ovaries, part of a complex composed of at least Panx, nxf2, piwi and Nxt1. The complex is knowns as Panx-induced cotranscriptional silencing (PICTS) complex, Panx-nxf2-dependent TAP/p15 silencing (Pandas complex), SFiNX (silencing factor interacting nuclear export variant) or piwi-Panx-nxf2-p15 (PPNP) complex. Interacts (via NIR region) with nxf2 (via TAP-C domain); the interaction is direct. As to expression, expressed in female gonads (at protein level).

The protein localises to the nucleus. Functionally, acts via the piwi-interacting RNA (piRNA) pathway which mediates the repression of transposable elements during meiosis by forming complexes composed of piRNAs and piwi proteins and governs the methylation and subsequent repression of transposons. Required for transcriptional silencing of transposons targeted by piwi and confers its effects by interacting with nascent RNA transcripts. Likely to be recruited to nascent transcripts cotranscriptionally by piwi and to recruit additional factors involved in transcriptional silencing. In the ovaries, forms a complex with nxf2, piwi and Nxt1 which acts as effectors of cotranscriptional transposon silencing. The interaction with nxf2 stabilizes the nuclear protein complex. The protein is Protein panoramix of Drosophila melanogaster (Fruit fly).